The primary structure comprises 980 residues: Macrophage colony-stimulating factor 1 receptor (980 aa).

Positions 1–19 (MGPRALLVLLVATAWHAQG) are cleaved as a signal peptide. The Extracellular segment spans residues 20 to 514 (VPVIQPSGPE…QLPDELLFTP (495 aa)). 5 Ig-like C2-type domains span residues 21–100 (PVIQ…IHLY), 107–197 (PWKV…KVQK), 202–297 (PATL…RVVE), 299–397 (AYLN…LTLR), and 400–499 (PEVR…WPIS). Cys-42 and Cys-84 are disulfide-bonded. Residues Asn-45, Asn-73, Asn-94, Asn-153, Asn-275, Asn-286, Asn-302, Asn-335, Asn-410, Asn-477, and Asn-490 are each glycosylated (N-linked (GlcNAc...) asparagine). 2 disulfides stabilise this stretch: Cys-127–Cys-177 and Cys-224–Cys-278. Cysteines 417 and 482 form a disulfide. A helical transmembrane segment spans residues 515 to 535 (VLLTCMSIMALLLLLLLLLLY). Residues 536-980 (KYKQKPKYQV…LLQPNNYQFC (445 aa)) are Cytoplasmic-facing. Residues 539–571 (QKPKYQVRWKIIESYEGNSYTFIDPTQLPYNEK) are regulatory juxtamembrane domain. 2 positions are modified to phosphotyrosine; by autocatalysis: Tyr-543 and Tyr-558. The Protein kinase domain occupies 579–908 (LQFGKTLGAG…PTFQQICSLL (330 aa)). ATP contacts are provided by residues 585-593 (LGAGAFGKV) and Lys-613. Residues Tyr-696 and Tyr-705 each carry the phosphotyrosine; by autocatalysis modification. A Phosphoserine modification is found at Ser-710. Position 720 is a phosphotyrosine; by autocatalysis (Tyr-720). The segment at 723–743 (MRPVSTSSSNDSFSEEDLGKE) is disordered. Asp-776 acts as the Proton acceptor in catalysis. The activation loop stretch occupies residues 794-816 (DFGLARDIMNDSNYIVKGNARLP). 2 positions are modified to phosphotyrosine; by autocatalysis: Tyr-807 and Tyr-921. The segment at 918 to 959 (VPNYTNLPSSSSSSSSSSSSCRTGSGGGSSSEPEEESSSEHL) is disordered. Low complexity predominate over residues 926–940 (SSSSSSSSSSSSCRT). Residue Tyr-977 is modified to Phosphotyrosine; by autocatalysis.

Belongs to the protein kinase superfamily. Tyr protein kinase family. CSF-1/PDGF receptor subfamily. As to quaternary structure, monomer. Homodimer. Interacts with CSF1 and IL34. Interaction with dimeric CSF1 or IL34 leads to receptor homodimerization. Interacts with INPPL1/SHIP2 and THOC5. Interacts (tyrosine phosphorylated) with PLCG2 (via SH2 domain). Interacts (tyrosine phosphorylated) with PIK3R1 (via SH2 domain). Interacts (tyrosine phosphorylated) with FYN, YES1 and SRC (via SH2 domain). Interacts (tyrosine phosphorylated) with CBL, GRB2 and SLA2. Autophosphorylated in response to CSF1 or IL34 binding. Phosphorylation at Tyr-558 is important for normal down-regulation of signaling by ubiquitination, internalization and degradation. Phosphorylation at Tyr-558 and Tyr-807 is important for interaction with SRC family members, including FYN, YES1 and SRC, and for subsequent activation of these protein kinases. Phosphorylation at Tyr-696 and Tyr-921 is important for interaction with GRB2. Phosphorylation at Tyr-720 is important for interaction with PIK3R1. Phosphorylation at Tyr-720 and Tyr-807 is important for interaction with PLCG2. Phosphorylation at Tyr-977 is important for interaction with CBL. Dephosphorylation by PTPN2 negatively regulates downstream signaling and macrophage differentiation. In terms of processing, ubiquitinated. Becomes rapidly polyubiquitinated after autophosphorylation, leading to its degradation.

The protein resides in the cell membrane. It catalyses the reaction L-tyrosyl-[protein] + ATP = O-phospho-L-tyrosyl-[protein] + ADP + H(+). Present in an inactive conformation in the absence of bound ligand. CSF1 or IL34 binding leads to dimerization and activation by autophosphorylation on tyrosine residues. Its function is as follows. Tyrosine-protein kinase that acts as a cell-surface receptor for CSF1 and IL34 and plays an essential role in the regulation of survival, proliferation and differentiation of hematopoietic precursor cells, especially mononuclear phagocytes, such as macrophages and monocytes. Promotes the release of pro-inflammatory chemokines in response to IL34 and CSF1, and thereby plays an important role in innate immunity and in inflammatory processes. Plays an important role in the regulation of osteoclast proliferation and differentiation, the regulation of bone resorption, and is required for normal bone and tooth development. Required for normal male and female fertility, and for normal development of milk ducts and acinar structures in the mammary gland during pregnancy. Promotes reorganization of the actin cytoskeleton, regulates formation of membrane ruffles, cell adhesion and cell migration, and promotes cancer cell invasion. Activates several signaling pathways in response to ligand binding, including the ERK1/2 and the JNK pathway. Phosphorylates PIK3R1, PLCG2, GRB2, SLA2 and CBL. Activation of PLCG2 leads to the production of the cellular signaling molecules diacylglycerol and inositol 1,4,5-trisphosphate, that then lead to the activation of protein kinase C family members, especially PRKCD. Phosphorylation of PIK3R1, the regulatory subunit of phosphatidylinositol 3-kinase, leads to activation of the AKT1 signaling pathway. Activated CSF1R also mediates activation of the MAP kinases MAPK1/ERK2 and/or MAPK3/ERK1, and of the SRC family kinases SRC, FYN and YES1. Activated CSF1R transmits signals both via proteins that directly interact with phosphorylated tyrosine residues in its intracellular domain, or via adapter proteins, such as GRB2. Promotes activation of STAT family members STAT3, STAT5A and/or STAT5B. Promotes tyrosine phosphorylation of SHC1 and INPP5D/SHIP-1. Receptor signaling is down-regulated by protein phosphatases, such as INPP5D/SHIP-1, that dephosphorylate the receptor and its downstream effectors, and by rapid internalization of the activated receptor. In the central nervous system, may play a role in the development of microglia macrophages. This Felis catus (Cat) protein is Macrophage colony-stimulating factor 1 receptor (CSF1R).